The sequence spans 688 residues: Complement C1s subcomponent (688 aa).

The signal sequence occupies residues 1 to 15; it reads MWCIVLFSLLAWVYA. A CUB 1 domain is found at 16–130; sequence EPTMYGEILS…TGFAAYYVAT (115 aa). 6 residues coordinate Ca(2+): E60, D68, D113, D131, I132, and E134. A disulfide bridge connects residues C65 and C83. One can recognise an EGF-like; calcium-binding domain in the interval 131 to 172; the sequence is DINECTDFVDVPCSHFCNNFIGGYFCSCPPEYFLHDDMKNCG. Cystine bridges form between C135-C147, C143-C156, and C158-C171. 3 residues coordinate Ca(2+): N149, F150, and G153. N149 is subject to (3R)-3-hydroxyasparagine. N174 carries N-linked (GlcNAc...) asparagine glycosylation. C175 and C202 form a disulfide bridge. The region spanning 175 to 290 is the CUB 2 domain; the sequence is CSGDVFTALI…KGWKLRYHGD (116 aa). Positions 226, 236, 275, 278, and 279 each coordinate Ca(2+). C234 and C251 are oxidised to a cystine. Sushi domains lie at 292 to 356 and 357 to 423; these read MPCP…KCQP and VDCG…KCVP. 7 disulfides stabilise this stretch: C294-C341, C321-C354, C359-C403, C386-C421, C425-C549, C595-C618, and C628-C659. N406 carries N-linked (GlcNAc...) asparagine glycosylation. One can recognise a Peptidase S1 domain in the interval 438 to 680; that stretch reads IIGGSDADIK…YVDWIMKTMQ (243 aa). Residues H475 and D529 each act as charge relay system in the active site. S632 (charge relay system) is an active-site residue.

Belongs to the peptidase S1 family. In terms of assembly, core component of the complement C1 complex, a calcium-dependent complex composed of 1 molecule of the C1Q subcomplex, 2 molecules of C1R and 2 molecules of C1S. The C1Q subcomplex is composed 18 subunits: 3 chains of C1QA, C1QB, and C1QC trimerize to form 6 collagen-like triple helices connected to six globular ligand-recognition modules. Cleaved and activated by C1R to generate Complement C1s subcomponent heavy and light chains. In terms of processing, the iron and 2-oxoglutarate dependent 3-hydroxylation of aspartate and asparagine is (R) stereospecific within EGF domains.

Its subcellular location is the secreted. It is found in the cell surface. It carries out the reaction Cleavage of Arg-|-Ala bond in complement component C4 to form C4a and C4b, and Lys(or Arg)-|-Lys bond in complement component C2 to form C2a and C2b: the 'classical' pathway C3 convertase.. Its activity is regulated as follows. Cleaved and activated by C1R. Immunoglobulin-binding promotes autoactivation of C1R, which results in the cleavage of the Arg-Ile bond in the catalytic domain. Inhibited by C1 inhibitor (SERPING1). Component of the complement C1 complex, a multiprotein complex that initiates the classical pathway of the complement system, a cascade of proteins that leads to phagocytosis and breakdown of pathogens and signaling that strengthens the adaptive immune system. C1S is activated following association of the C1 complex with immunoglobulins (IgG or IgM) complexed with antigens to form antigen-antibody complexes on the surface of pathogens. C1S is cleaved and activated by C1R to generate C1s subcomponent heavy and light chains. C1s subcomponent light chain then cleaves and activates C2 and C4, the next components of the classical complement pathway. In terms of biological role, serine protease component of the complement C1 complex, which catalyzes cleavage and activation of C2 and C4, the next components of the classical complement pathway. Also able to cleave C1 inhibitor (SERPING1) in vitro; additional evidence is however required to confirm this result in vivo. Also cleaves IGFBP5 and thereby inhibits the trophic effects of IGF1. This Homo sapiens (Human) protein is Complement C1s subcomponent.